Reading from the N-terminus, the 494-residue chain is Calmodulin-binding protein 60 A (494 aa).

The calmodulin-binding stretch occupies residues 1–62 (MRIPTYDFGS…AGIKWICEKE (62 aa)). Positions 132–252 (VSDWTDEDIR…AFHRRLNLSN (121 aa)) are DNA-binding.

Belongs to the plant ACBP60 protein family. As to quaternary structure, interacts with calmodulin (CaM). Expressed in stems, flowers and root.

It is found in the nucleus. Functionally, transcription activator that binds DNA in a sequence-specific manner, likely 5'-GAAATTTTGG-3', to promote the expression of target genes. This is Calmodulin-binding protein 60 A from Arabidopsis thaliana (Mouse-ear cress).